A 1047-amino-acid polypeptide reads, in one-letter code: Ubiquitin carboxyl-terminal hydrolase 48 (1047 aa).

The USP domain maps to 89 to 416 (VGLTNLGATC…NAYMLVYKQQ (328 aa)). Cys-98 acts as the Nucleophile in catalysis. The active-site Proton acceptor is the His-348. DUSP domains follow at residues 457 to 551 (QSVD…RSSL), 567 to 697 (NQLN…DHDP), and 717 to 830 (MMAN…RIHD). Residues 609 to 647 (LEEDEEETKHNNSKINGEKSSPGTKADGVKGDSEDGDGE) form a disordered region. Over residues 621–631 (SKINGEKSSPG) the composition is skewed to polar residues. Basic and acidic residues predominate over residues 635 to 647 (DGVKGDSEDGDGE). A disordered region spans residues 887 to 928 (PEFSVSGSDVEDEKEEPKLDGEKDPDFSQTEGGAKRQKLNDT). Positions 901-912 (EEPKLDGEKDPD) are enriched in basic and acidic residues. The region spanning 961–1012 (VSANQTLKDLKIQIMHAFSVAPFDQNLSIDGRCLKDDSATLGSLGVIPESII) is the Ubiquitin-like domain.

This sequence belongs to the peptidase C19 family.

Its subcellular location is the cytoplasm. The protein localises to the nucleus. The enzyme catalyses Thiol-dependent hydrolysis of ester, thioester, amide, peptide and isopeptide bonds formed by the C-terminal Gly of ubiquitin (a 76-residue protein attached to proteins as an intracellular targeting signal).. In terms of biological role, recognizes and hydrolyzes the peptide bond at the C-terminal Gly of ubiquitin. Involved in the processing of poly-ubiquitin precursors as well as that of ubiquitinated proteins. This chain is Ubiquitin carboxyl-terminal hydrolase 48 (usp48), found in Danio rerio (Zebrafish).